The sequence spans 172 residues: Disulfide bond formation protein B (172 aa).

The Cytoplasmic segment spans residues 1–11; it reads MNPFRWSFRAQ. A helical transmembrane segment spans residues 12-28; it reads FLLGFLACAGLLAYAIY. The Periplasmic portion of the chain corresponds to 29–46; sequence VQLHLGLEPCPLCIFQRI. Cysteine 38 and cysteine 41 form a disulfide bridge. Residues 47–63 traverse the membrane as a helical segment; sequence AFAALAVFFLIGALHGP. The Cytoplasmic segment spans residues 64 to 70; the sequence is RAAGARK. Residues 71–88 form a helical membrane-spanning segment; sequence VYGVLSFIAAGVGMGIGA. The Periplasmic segment spans residues 89-145; it reads RHVWVQIRPKDMMSSCGPPLSFLSETMGPFEVFRTVLTGTGDCGNIDWRFLGLSMPM. Cysteines 104 and 131 form a disulfide. Residues 146–164 traverse the membrane as a helical segment; that stretch reads WSMVWFVGLALWALSAGFK. The Cytoplasmic segment spans residues 165–172; the sequence is ARRSSLHH.

Belongs to the DsbB family.

Its subcellular location is the cell inner membrane. In terms of biological role, required for disulfide bond formation in some periplasmic proteins. Acts by oxidizing the DsbA protein. In Xanthomonas oryzae pv. oryzae (strain MAFF 311018), this protein is Disulfide bond formation protein B.